Reading from the N-terminus, the 579-residue chain is Rop guanine nucleotide exchange factor 6 (579 aa).

A compositionally biased stretch (low complexity) spans 31-61; that stretch reads ESTTDSSLSSSSSGVGSSSGRSSVAERSVSS. Positions 31–89 are disordered; it reads ESTTDSSLSSSSSGVGSSSGRSSVAERSVSSPPTKSQILGWPLGQGSWRKSSGKMKKKT. The region spanning 98 to 479 is the PRONE domain; the sequence is FKRVGTETSE…DISKDDGDGD (382 aa).

Guanine-nucleotide exchange factor (GEF) that acts as an activator of Rop (Rho of plants) GTPases by promoting the exchange of GDP for GTP. This is Rop guanine nucleotide exchange factor 6 (ROPGEF6) from Arabidopsis thaliana (Mouse-ear cress).